The chain runs to 182 residues: Late embryogenesis abundant protein 3 (182 aa).

The segment at 1-51 (MAQHQHSPQRPRDQDNTRPHDQYGIVFSVSGDDVARKQGDSFSQPDPTVAT) is disordered. The Nuclear localization signal (NLS) motif lies at 7-11 (SPQRP). Basic and acidic residues predominate over residues 10 to 21 (RPRDQDNTRPHD). SMP domains are found at residues 58–115 (VTIG…TNEQ) and 123–181 (VNIA…LNQQ). The segment at 145 to 182 (EDAEAVVGAELRSSSEMKTTPGGVADSMSAGARLNQQL) is disordered.

Belongs to the LEA type SMP family.

The protein localises to the cytoplasm. It localises to the nucleus. Its function is as follows. LEA proteins are late embryonic proteins abundant in higher plant seed embryos. The function of those proteins is not known. The chain is Late embryogenesis abundant protein 3 from Arabidopsis thaliana (Mouse-ear cress).